A 548-amino-acid chain; its full sequence is Glucose-6-phosphate isomerase (548 aa).

The active-site Proton donor is the glutamate 354. Catalysis depends on residues histidine 385 and lysine 513.

It belongs to the GPI family.

The protein localises to the cytoplasm. The enzyme catalyses alpha-D-glucose 6-phosphate = beta-D-fructose 6-phosphate. The protein operates within carbohydrate biosynthesis; gluconeogenesis. It participates in carbohydrate degradation; glycolysis; D-glyceraldehyde 3-phosphate and glycerone phosphate from D-glucose: step 2/4. Its function is as follows. Catalyzes the reversible isomerization of glucose-6-phosphate to fructose-6-phosphate. The polypeptide is Glucose-6-phosphate isomerase (Marinomonas sp. (strain MWYL1)).